The following is a 508-amino-acid chain: MQDFLEFQSISKGYPGVQALSEVSFSVRKGAVHGLMGENGAGKSTLIRVLSGDQAADTGEIRINGEPQHYRSVRDAFNAGVIVIHQELQLVPELTVAENLWLGRFPGKAGVIDRRQLIRVVSDRLAEIGIDVDPEAKVASLSIGERQMVEIAKAVMTDARVIALDEPTSSLSSRESEILFALIDRLRSNGTVILYVSHRLDEIFRLCNSLTVLRDGRLAAHHPDISKVGREQIIAEMVGREISNIWGWRARTLGAARLTVERVSGANLPQPISFTVRAGEILGFFGLIGAGRSEMARLVYGADRRRQGKVLVDGLAVPADSPRLSIRAGVVLCPEDRKFDGIVQGRSIEENMAISSRRHFSPFGVVDKGKEAELAERFIAKLRVRTPSRHQDIVNLSGGNQQKVILGRWLSEEGVKVLLIDEPTRGIDVGAKSEIYEILYELAAQGMAIVVISSELPEVMGIADRILVMCEGRIAAEIDRSDFDEHRILAAALPDASATTATLPEQVS.

ABC transporter domains lie at 5–240 (LEFQ…MVGR) and 250–496 (ARTL…LPDA). 37–44 (GENGAGKS) contacts ATP.

It belongs to the ABC transporter superfamily. Arabinose importer (TC 3.A.1.2.2) family. As to quaternary structure, the complex is composed of two ATP-binding proteins (AraG), two transmembrane proteins (AraH) and a solute-binding protein (AraF).

The protein localises to the cell inner membrane. The catalysed reaction is L-arabinose(out) + ATP + H2O = L-arabinose(in) + ADP + phosphate + H(+). Functionally, part of the ABC transporter complex AraFGH involved in arabinose import. Responsible for energy coupling to the transport system. The chain is Arabinose import ATP-binding protein AraG from Rhizobium meliloti (strain 1021) (Ensifer meliloti).